The following is a 314-amino-acid chain: Jacalin-related lectin 9 (314 aa).

Residues 1–23 (MIFIYIFLFLSSAIIDSNGFAMA) form the signal peptide. Jacalin-type lectin domains follow at residues 24-165 (QKLE…YLTK) and 168-313 (PTKS…YFSP).

Belongs to the jacalin lectin family.

The chain is Jacalin-related lectin 9 (JAL9) from Arabidopsis thaliana (Mouse-ear cress).